A 309-amino-acid chain; its full sequence is General transcription factor IIH subunit 3 (309 aa).

The C4-type zinc finger occupies 269 to 286 (CSVCLSIFCNFSPICTTC).

It belongs to the TFB4 family. As to quaternary structure, part of a TFIID-containing RNA polymerase II pre-initiation complex that is composed of TBP and at least GTF2A1, GTF2A2, GTF2E1, GTF2E2, GTF2F1, GTF2H2, GTF2H3, GTF2H4, GTF2H5, GTF2B, TCEA1, ERCC2, ERCC3, TAF1, TAF2, TAF3, TAF4, TAF5, TAF6, TAF7, TAF8, TAF9, TAF10, TAF11, TAF12 and TAF13. Component of the 7-subunit TFIIH core complex composed of XPB/ERCC3, XPD/ERCC2, GTF2H1, GTF2H2, GTF2H3, GTF2H4 and GTF2H5, which is active in NER. The core complex associates with the 3-subunit CDK-activating kinase (CAK) module composed of CCNH/cyclin H, CDK7 and MNAT1 to form the 10-subunit holoenzyme (holo-TFIIH) active in transcription. Interacts with RARA; the interaction requires prior phosphorylation of RARA on 'Ser-369' which then enhances interaction of RARA with CDK7.

Its subcellular location is the nucleus. Component of the general transcription and DNA repair factor IIH (TFIIH) core complex, which is involved in general and transcription-coupled nucleotide excision repair (NER) of damaged DNA and, when complexed to CAK, in RNA transcription by RNA polymerase II. In NER, TFIIH acts by opening DNA around the lesion to allow the excision of the damaged oligonucleotide and its replacement by a new DNA fragment. In transcription, TFIIH has an essential role in transcription initiation. When the pre-initiation complex (PIC) has been established, TFIIH is required for promoter opening and promoter escape. Phosphorylation of the C-terminal tail (CTD) of the largest subunit of RNA polymerase II by the kinase module CAK controls the initiation of transcription. This Bos taurus (Bovine) protein is General transcription factor IIH subunit 3 (GTF2H3).